Reading from the N-terminus, the 124-residue chain is Small ribosomal subunit protein uS13 (124 aa).

Residues 91-124 form a disordered region; it reads HRKGLPVNGQNTRNNARTRKGKPKAVTGKKQAGK.

It belongs to the universal ribosomal protein uS13 family. As to quaternary structure, part of the 30S ribosomal subunit. Forms a loose heterodimer with protein S19. Forms two bridges to the 50S subunit in the 70S ribosome.

Located at the top of the head of the 30S subunit, it contacts several helices of the 16S rRNA. In the 70S ribosome it contacts the 23S rRNA (bridge B1a) and protein L5 of the 50S subunit (bridge B1b), connecting the 2 subunits; these bridges are implicated in subunit movement. Contacts the tRNAs in the A and P-sites. This Acholeplasma laidlawii (strain PG-8A) protein is Small ribosomal subunit protein uS13.